An 864-amino-acid chain; its full sequence is Disintegrin and metalloproteinase domain-containing protein 15 (864 aa).

The N-terminal stretch at Met1–Pro17 is a signal peptide. The tract at residues Pro17–Val49 is disordered. The propeptide occupies Arg18–Arg208. The span at Gln34–Val49 shows a compositional bias: polar residues. An N-linked (GlcNAc...) asparagine glycan is attached at Asn57. The short motif at His178–His185 is the Cysteine switch element. Cys180 is a Zn(2+) binding site. Residues Asp209 to Thr698 are Extracellular-facing. Residues Lys215–Pro416 enclose the Peptidase M12B domain. Asn239 carries N-linked (GlcNAc...) asparagine glycosylation. Cystine bridges form between Cys325/Cys411, Cys367/Cys395, Cys369/Cys378, and Cys482/Cys502. His350 contacts Zn(2+). Glu351 is an active-site residue. 2 residues coordinate Zn(2+): His354 and His360. N-linked (GlcNAc...) asparagine glycans are attached at residues Asn391 and Asn394. One can recognise a Disintegrin domain in the interval Ser423–Asp510. Asn608 and Asn613 each carry an N-linked (GlcNAc...) asparagine glycan. Disulfide bonds link Cys659/Cys669, Cys663/Cys675, and Cys677/Cys686. An EGF-like domain is found at Cys659 to Met687. The chain crosses the membrane as a helical span at residues Gly699–Tyr719. Residues Tyr717 and Tyr737 each carry the phosphotyrosine; by HCK and LCK modification. The Cytoplasmic segment spans residues Arg720–Leu864. The segment at Arg738 to Leu864 is disordered. Residues Arg753–Val765 show a composition bias toward polar residues. 2 stretches are compositionally biased toward pro residues: residues Pro768–Val780 and Pro810–Ala825. The short motif at Pro816–Pro822 is the SH3-binding element. A compositionally biased stretch (low complexity) spans Asn826–Ser850. Positions Arg851 to Pro857 match the SH3-binding motif.

Interacts with ITAGV-ITGB3 (vitronectin receptor). Interacts with SH3GL2 and SNX9; this interaction occurs preferentially with ADAM15 precursor, rather than the processed form, suggesting it occurs in a secretory pathway compartment prior to the medial Golgi. Interacts with ITAG9-ITGB1. Interacts specifically with Src family protein-tyrosine kinases (PTKs). Interacts with SH3PXD2A. Interacts with ITAGV-ITGB1. Interacts with GRB2, HCK, ITSN1, ITSN2, LYN, MAPK1, MAPK3, NCF1, NCK1, nephrocystin, PTK6, SNX33, LCK and SRC. Zn(2+) is required as a cofactor. In terms of processing, the precursor is cleaved by a furin endopeptidase. Post-translationally, phosphorylation increases association with PTKs. Predominantly expressed in brain, spinal cord, sciatic nerve and lung. Expressed at lower levels in all other tissues. In the peripheral nervous system, expressed predominantly by Schwann cells. In the central nervous system, preferentially expressed by neuronal cells.

Its subcellular location is the endomembrane system. It is found in the cell junction. The protein localises to the adherens junction. It localises to the cell projection. The protein resides in the cilium. Its subcellular location is the flagellum. It is found in the cytoplasmic vesicle. The protein localises to the secretory vesicle. It localises to the acrosome. Functionally, active metalloproteinase with gelatinolytic and collagenolytic activity. Plays a role in the wound healing process. Mediates both heterotypic intraepithelial cell/T-cell interactions and homotypic T-cell aggregation. Inhibits beta-1 integrin-mediated cell adhesion and migration of airway smooth muscle cells. Suppresses cell motility on or towards fibronectin possibly by driving alpha-v/beta-1 integrin (ITAGV-ITGB1) cell surface expression via ERK1/2 inactivation. Cleaves E-cadherin in response to growth factor deprivation. Plays a role in glomerular cell migration. Plays a role in pathological neovascularization. May play a role in cartilage remodeling. May be proteolytically processed, during sperm epididymal maturation and the acrosome reaction. May play a role in sperm-egg binding through its disintegrin domain. This Rattus norvegicus (Rat) protein is Disintegrin and metalloproteinase domain-containing protein 15 (Adam15).